The chain runs to 382 residues: Chaperone protein DnaJ (382 aa).

Residues 5-70 (DYYEVLGVSR…DKKAAYDRYG (66 aa)) form the J domain. The CR-type zinc finger occupies 141–219 (GVQKTINVPA…CHGAGRVEKE (79 aa)). Zn(2+)-binding residues include Cys154, Cys157, Cys171, Cys174, Cys193, Cys196, Cys207, and Cys210. CXXCXGXG motif repeat units lie at residues 154 to 161 (CDSCKGTG), 171 to 178 (CPTCSGMG), 193 to 200 (CPTCNGMG), and 207 to 214 (CKSCHGAG).

It belongs to the DnaJ family. In terms of assembly, homodimer. Zn(2+) serves as cofactor.

Its subcellular location is the cytoplasm. Functionally, participates actively in the response to hyperosmotic and heat shock by preventing the aggregation of stress-denatured proteins and by disaggregating proteins, also in an autonomous, DnaK-independent fashion. Unfolded proteins bind initially to DnaJ; upon interaction with the DnaJ-bound protein, DnaK hydrolyzes its bound ATP, resulting in the formation of a stable complex. GrpE releases ADP from DnaK; ATP binding to DnaK triggers the release of the substrate protein, thus completing the reaction cycle. Several rounds of ATP-dependent interactions between DnaJ, DnaK and GrpE are required for fully efficient folding. Also involved, together with DnaK and GrpE, in the DNA replication of plasmids through activation of initiation proteins. The chain is Chaperone protein DnaJ from Cereibacter sphaeroides (strain ATCC 17025 / ATH 2.4.3) (Rhodobacter sphaeroides).